The chain runs to 453 residues: Chromosomal replication initiator protein DnaA (453 aa).

Positions 1–74 (MKEKQFWNRI…GFEIYDAEIT (74 aa)) are domain I, interacts with DnaA modulators. The segment at 74–113 (TPHYIFTKPQDTTSSQVEEATNLTLYNYSPKLVSIPYSDT) is domain II. The segment at 114-331 (GLKEKYTFDN…GAINDITLIA (218 aa)) is domain III, AAA+ region. Residues G158, G160, K161, and T162 each coordinate ATP. The interval 332–453 (RVKKIKDITI…EIESIKKKIK (122 aa)) is domain IV, binds dsDNA.

This sequence belongs to the DnaA family. In terms of assembly, oligomerizes as a right-handed, spiral filament on DNA at oriC.

The protein resides in the cytoplasm. Its function is as follows. Plays an essential role in the initiation and regulation of chromosomal replication. ATP-DnaA binds to the origin of replication (oriC) to initiate formation of the DNA replication initiation complex once per cell cycle. Binds the DnaA box (a 9 base pair repeat at the origin) and separates the double-stranded (ds)DNA. Forms a right-handed helical filament on oriC DNA; dsDNA binds to the exterior of the filament while single-stranded (ss)DNA is stabiized in the filament's interior. The ATP-DnaA-oriC complex binds and stabilizes one strand of the AT-rich DNA unwinding element (DUE), permitting loading of DNA polymerase. After initiation quickly degrades to an ADP-DnaA complex that is not apt for DNA replication. Binds acidic phospholipids. In Streptococcus pneumoniae serotype 19F (strain G54), this protein is Chromosomal replication initiator protein DnaA.